The sequence spans 290 residues: Ribosomal protein L11 methyltransferase (290 aa).

The S-adenosyl-L-methionine site is built by threonine 136, glycine 157, aspartate 179, and asparagine 222.

It belongs to the methyltransferase superfamily. PrmA family.

The protein resides in the cytoplasm. The catalysed reaction is L-lysyl-[protein] + 3 S-adenosyl-L-methionine = N(6),N(6),N(6)-trimethyl-L-lysyl-[protein] + 3 S-adenosyl-L-homocysteine + 3 H(+). Functionally, methylates ribosomal protein L11. This is Ribosomal protein L11 methyltransferase from Porphyromonas gingivalis (strain ATCC BAA-308 / W83).